Reading from the N-terminus, the 232-residue chain is MSDPAPEVAPAAPVASPAKAKKEKKPKSDKPKKPKAPRTHPPVSEMVVNAIKTLKERGGSSLQAIKKFLVAQYKVDVEKLAPFIKKYLKGGAVVKGELLQTKGKGASGSFKLPAAAKKEKVAKKPMKATGEKKPKAAAKPKKAGEKKKSIAKKPKAATATKVKKPVAKSTKKQAAVKPAAKKAAPKPKAVPKPKAAKPKKEAKPKKAAAPKAAKKPAQKKPKATKKPAAKKA.

Low complexity predominate over residues 1 to 18 (MSDPAPEVAPAAPVASPA). Disordered regions lie at residues 1 to 44 (MSDP…PPVS) and 103 to 232 (GKGA…AKKA). The 76-residue stretch at 39–114 (THPPVSEMVV…GASGSFKLPA (76 aa)) folds into the H15 domain. 2 stretches are compositionally biased toward basic residues: residues 149 to 171 (SIAK…KSTK) and 179 to 232 (AAKK…AKKA).

This sequence belongs to the histone H1/H5 family.

It is found in the nucleus. It localises to the chromosome. In terms of biological role, histones H1 are necessary for the condensation of nucleosome chains into higher-order structures. The protein is Histone H1-II of Glyptotendipes barbipes (Midge).